Consider the following 353-residue polypeptide: Melanin-concentrating hormone receptor 1 (353 aa).

The segment at 1–26 (MDLQTSLLSTGPNASNISDGQDNLTL) is disordered. The Extracellular segment spans residues 1 to 45 (MDLQTSLLSTGPNASNISDGQDNLTLPGSPPRTGSVSYINIIMPS). N-linked (GlcNAc...) asparagine glycans are attached at residues asparagine 13, asparagine 16, and asparagine 23. A helical membrane pass occupies residues 46–66 (VFGTICLLGIVGNSTVIFAVV). Topologically, residues 67–79 (KKSKLHWCSNVPD) are cytoplasmic. Residues 80–100 (IFIINLSVVDLLFLLGMPFMI) form a helical membrane-spanning segment. Residues 101 to 116 (HQLMGNGVWHFGETMC) are Extracellular-facing. Cysteine 116 and cysteine 194 are joined by a disulfide. Residues 117–139 (TLITAMDANSQFTSTYILTAMTI) traverse the membrane as a helical segment. Over 140–161 (DRYLATVHPISSTKFRKPSMAT) the chain is Cytoplasmic. Residues 162–182 (LVICLLWALSFISITPVWLYA) traverse the membrane as a helical segment. Residues 183–204 (RLIPFPGGAVGCGIRLPNPDTD) are Extracellular-facing. Residues 205 to 225 (LYWFTLYQFFLAFALPFVVIT) form a helical membrane-spanning segment. Residues 226–256 (AAYVKILQRMTSSVAPASQRSIRLRTKRVTR) lie on the Cytoplasmic side of the membrane. The chain crosses the membrane as a helical span at residues 257 to 277 (TAIAICLVFFVCWAPYYVLQL). The Extracellular portion of the chain corresponds to 278–294 (TQLSISRPTLTFVYLYN). The chain crosses the membrane as a helical span at residues 295–315 (AAISLGYANSCLNPFVYIVLC). Over 316 to 353 (ETFRKRLVLSVKPAAQGQLRTVSNAQTADEERTESKGT) the chain is Cytoplasmic.

Belongs to the G-protein coupled receptor 1 family. In terms of assembly, interacts with NCDN. As to expression, high level in the brain, moderate amounts in the eye and skeletal muscle, and small amounts in tongue and pituitary.

The protein localises to the cell membrane. In terms of biological role, receptor for melanin-concentrating hormone, coupled to G proteins that inhibit adenylyl cyclase. The protein is Melanin-concentrating hormone receptor 1 of Rattus norvegicus (Rat).